Consider the following 278-residue polypeptide: Formamidopyrimidine-DNA glycosylase (278 aa).

Pro2 acts as the Schiff-base intermediate with DNA in catalysis. The Proton donor role is filled by Glu3. Catalysis depends on Lys58, which acts as the Proton donor; for beta-elimination activity. 2 residues coordinate DNA: His92 and Arg111. The FPG-type zinc finger occupies 239–273 (HVYGKKGVPCERCGTPIEKIKVAQRGTHFCPKCQI). Arg263 (proton donor; for delta-elimination activity) is an active-site residue.

Belongs to the FPG family. In terms of assembly, monomer. The cofactor is Zn(2+).

The enzyme catalyses Hydrolysis of DNA containing ring-opened 7-methylguanine residues, releasing 2,6-diamino-4-hydroxy-5-(N-methyl)formamidopyrimidine.. It catalyses the reaction 2'-deoxyribonucleotide-(2'-deoxyribose 5'-phosphate)-2'-deoxyribonucleotide-DNA = a 3'-end 2'-deoxyribonucleotide-(2,3-dehydro-2,3-deoxyribose 5'-phosphate)-DNA + a 5'-end 5'-phospho-2'-deoxyribonucleoside-DNA + H(+). Functionally, involved in base excision repair of DNA damaged by oxidation or by mutagenic agents. Acts as a DNA glycosylase that recognizes and removes damaged bases. Has a preference for oxidized purines, such as 7,8-dihydro-8-oxoguanine (8-oxoG). Has AP (apurinic/apyrimidinic) lyase activity and introduces nicks in the DNA strand. Cleaves the DNA backbone by beta-delta elimination to generate a single-strand break at the site of the removed base with both 3'- and 5'-phosphates. In Latilactobacillus sakei subsp. sakei (strain 23K) (Lactobacillus sakei subsp. sakei), this protein is Formamidopyrimidine-DNA glycosylase.